The following is a 166-amino-acid chain: UPF0336 protein ML1908 (166 aa).

Belongs to the UPF0336 family.

This Mycobacterium leprae (strain TN) protein is UPF0336 protein ML1908.